The following is a 393-amino-acid chain: NAD(P)H-quinone oxidoreductase subunit H, chloroplastic (393 aa).

Belongs to the complex I 49 kDa subunit family. NDH is composed of at least 16 different subunits, 5 of which are encoded in the nucleus.

The protein resides in the plastid. It localises to the chloroplast thylakoid membrane. The catalysed reaction is a plastoquinone + NADH + (n+1) H(+)(in) = a plastoquinol + NAD(+) + n H(+)(out). It carries out the reaction a plastoquinone + NADPH + (n+1) H(+)(in) = a plastoquinol + NADP(+) + n H(+)(out). Its function is as follows. NDH shuttles electrons from NAD(P)H:plastoquinone, via FMN and iron-sulfur (Fe-S) centers, to quinones in the photosynthetic chain and possibly in a chloroplast respiratory chain. The immediate electron acceptor for the enzyme in this species is believed to be plastoquinone. Couples the redox reaction to proton translocation, and thus conserves the redox energy in a proton gradient. The polypeptide is NAD(P)H-quinone oxidoreductase subunit H, chloroplastic (Helianthus annuus (Common sunflower)).